The primary structure comprises 291 residues: Gamma-sarcoglycan (291 aa).

The helical; Signal-anchor for type II membrane protein transmembrane segment at 38–58 (LFVLLLLIVLLVNFALTIWIL) threads the bilayer. Residues 59 to 291 (RVMWFSPVGM…TCHEHSHLCL (233 aa)) lie on the Extracellular side of the membrane. A glycan (N-linked (GlcNAc...) asparagine) is linked at asparagine 110. Disulfide bonds link cysteine 265/cysteine 290 and cysteine 267/cysteine 283.

The protein belongs to the sarcoglycan beta/delta/gamma/zeta family. Interacts with the syntrophin SNTA1. Cross-link to form 2 major subcomplexes: one consisting of SGCB, SGCD and SGCG and the other consisting of SGCB and SGCD. The association between SGCB and SGCG is particularly strong while SGCA is loosely associated with the other sarcoglycans. Interacts with FLNC. In terms of processing, disulfide bonds are present.

It localises to the cell membrane. It is found in the sarcolemma. The protein resides in the cytoplasm. The protein localises to the cytoskeleton. Component of the sarcoglycan complex, a subcomplex of the dystrophin-glycoprotein complex which forms a link between the F-actin cytoskeleton and the extracellular matrix. This Bos taurus (Bovine) protein is Gamma-sarcoglycan (SGCG).